A 368-amino-acid polypeptide reads, in one-letter code: Endoglucanase (368 aa).

Positions 1 to 21 are cleaved as a signal peptide; the sequence is MNVLRSGIVTMLLLAAFSVQA. E55 (proton donor) is an active-site residue. D116 (nucleophile) is an active-site residue.

Belongs to the glycosyl hydrolase 8 (cellulase D) family.

Its subcellular location is the secreted. The catalysed reaction is Endohydrolysis of (1-&gt;4)-beta-D-glucosidic linkages in cellulose, lichenin and cereal beta-D-glucans.. Its pathway is glycan metabolism; bacterial cellulose biosynthesis. Functionally, hydrolyzes carboxymethylcellulose. The chain is Endoglucanase (bcsZ) from Escherichia coli (strain K12).